Here is a 330-residue protein sequence, read N- to C-terminus: Carbonic anhydrase (330 aa).

The interval 1 to 109 (MSAASAFAMN…AATRIDQITA (109 aa)) is chloroplast transit peptide-like.

This sequence belongs to the beta-class carbonic anhydrase family.

Its subcellular location is the cytoplasm. The enzyme catalyses hydrogencarbonate + H(+) = CO2 + H2O. In terms of biological role, reversible hydration of carbon dioxide. The protein is Carbonic anhydrase of Flaveria bidentis (Coastal plain yellowtops).